We begin with the raw amino-acid sequence, 369 residues long: S-(hydroxymethyl)glutathione dehydrogenase (369 aa).

Zn(2+) is bound by residues Cys-40, His-62, Cys-92, Cys-95, Cys-98, Cys-106, and Cys-169.

The protein belongs to the zinc-containing alcohol dehydrogenase family. Class-III subfamily. As to quaternary structure, homodimer. Requires Zn(2+) as cofactor.

It is found in the cytoplasm. It catalyses the reaction S-(hydroxymethyl)glutathione + NADP(+) = S-formylglutathione + NADPH + H(+). The catalysed reaction is S-(hydroxymethyl)glutathione + NAD(+) = S-formylglutathione + NADH + H(+). The enzyme catalyses a primary alcohol + NAD(+) = an aldehyde + NADH + H(+). It carries out the reaction a secondary alcohol + NAD(+) = a ketone + NADH + H(+). It catalyses the reaction S-nitrosoglutathione + NADH + H(+) = S-(hydroxysulfenamide)glutathione + NAD(+). In terms of biological role, has high formaldehyde dehydrogenase activity in the presence of glutathione and catalyzes the oxidation of normal alcohols in a reaction that is not GSH-dependent. In addition, hemithiolacetals other than those formed from GSH, including omega-thiol fatty acids, also are substrates. Also acts as a S-nitroso-glutathione reductase by catalyzing the NADH-dependent reduction of S-nitrosoglutathione. This Escherichia coli O1:K1 / APEC protein is S-(hydroxymethyl)glutathione dehydrogenase (frmA).